The primary structure comprises 811 residues: Lon protease 1 (811 aa).

The Lon N-terminal domain maps to 15 to 212 (LPVLSLRDTV…SLALHLYRQI (198 aa)). 376–383 (GPPGTGKT) lines the ATP pocket. Residues 613-794 (YDQPGVATGM…DEALARCLRL (182 aa)) form the Lon proteolytic domain. Active-site residues include Ser-700 and Lys-743.

It belongs to the peptidase S16 family. As to quaternary structure, homohexamer. Organized in a ring with a central cavity.

Its subcellular location is the cytoplasm. The enzyme catalyses Hydrolysis of proteins in presence of ATP.. Functionally, ATP-dependent serine protease that mediates the selective degradation of mutant and abnormal proteins as well as certain short-lived regulatory proteins. Required for cellular homeostasis and for survival from DNA damage and developmental changes induced by stress. Degrades polypeptides processively to yield small peptide fragments that are 5 to 10 amino acids long. Binds to DNA in a double-stranded, site-specific manner. In Sorangium cellulosum (strain So ce56) (Polyangium cellulosum (strain So ce56)), this protein is Lon protease 1.